The following is a 260-amino-acid chain: Proteasome subunit alpha (260 aa).

Belongs to the peptidase T1A family. The 20S proteasome core is composed of 14 alpha and 14 beta subunits that assemble into four stacked heptameric rings, resulting in a barrel-shaped structure. The two inner rings, each composed of seven catalytic beta subunits, are sandwiched by two outer rings, each composed of seven alpha subunits. The catalytic chamber with the active sites is on the inside of the barrel. Has a gated structure, the ends of the cylinder being occluded by the N-termini of the alpha-subunits. Is capped at one or both ends by the proteasome regulatory ATPase, PAN.

It is found in the cytoplasm. Its activity is regulated as follows. The formation of the proteasomal ATPase PAN-20S proteasome complex, via the docking of the C-termini of PAN into the intersubunit pockets in the alpha-rings, triggers opening of the gate for substrate entry. Interconversion between the open-gate and close-gate conformations leads to a dynamic regulation of the 20S proteasome proteolysis activity. In terms of biological role, component of the proteasome core, a large protease complex with broad specificity involved in protein degradation. The protein is Proteasome subunit alpha of Thermococcus sp. (strain JCM 11816 / KS-1).